Reading from the N-terminus, the 528-residue chain is Abrin-d (528 aa).

The residue at position 1 (glutamine 1) is a Pyrrolidone carboxylic acid. Residue glutamate 164 is part of the active site. Asparagine 200 is a glycosylation site (N-linked (GlcNAc...) asparagine). Intrachain disulfides connect cysteine 247/cysteine 269, cysteine 286/cysteine 305, and cysteine 329/cysteine 346. The region spanning 273-400 (YEPTVRIGGR…YLMRQGWRTG (128 aa)) is the Ricin B-type lectin 1 domain. A 1-alpha repeat occupies 283–325 (DGMCVDVYDDGYHNGNRIIAWKCKDRLEENQLWTLKSDLTIRS). A 1-beta repeat occupies 326 to 366 (NGKCLTTEGYAPGNYVMIYDCTSAVAEATYWEIWDNGTIIN). Asparagine 361 and asparagine 401 each carry an N-linked (GlcNAc...) asparagine glycan. The 1-gamma repeat unit spans residues 369 to 401 (SALVLSAESSSMGGTLTVQTNEYLMRQGWRTGN). The 125-residue stretch at 403–527 (TSPFVTSISG…GKPNQIWLTL (125 aa)) folds into the Ricin B-type lectin 2 domain. The 2-alpha repeat unit spans residues 414-449 (SDLCMQAQGSNVWLADCDNNKKEQQWALYTDGSIRS). 2 disulfides stabilise this stretch: cysteine 417/cysteine 430 and cysteine 456/cysteine 473. The stretch at 453–492 (TNNCLTSKDHKQGSPIVLMACSNGWASQRWLFKNDGSIYS) is one 2-beta repeat. Residues 495–528 (DDMVMDVKGSDPSLKQIILWPYTGKPNQIWLTLF) form a 2-gamma repeat.

It in the N-terminal section; belongs to the ribosome-inactivating protein family. Type 2 RIP subfamily. As to quaternary structure, disulfide-linked dimer of A and B chains.

It carries out the reaction Endohydrolysis of the N-glycosidic bond at one specific adenosine on the 28S rRNA.. Its function is as follows. The A chain is responsible for inhibiting protein synthesis through the catalytic inactivation of 60S ribosomal subunits by removing adenine from position 4,324 of 28S rRNA. The B chain is a galactose-specific lectin that facilitates the binding of abrin to the cell membrane that precedes endocytosis. In Abrus precatorius (Indian licorice), this protein is Abrin-d.